A 1302-amino-acid chain; its full sequence is Serine-enriched protein (1302 aa).

One can recognise a BTB domain in the interval 40-158 (CDVTFLVGDT…IHTGCVTLQP (119 aa)). Disordered stretches follow at residues 325-532 (SIDP…RSPT), 575-624 (PIPP…SVMR), 648-685 (FTRAESGSSGGPLIRQSTFSASPAASSTAAKSAVQKQM), 701-752 (YAKM…SSDE), 834-858 (FTRRSESREPIEPRISEERESDSND), 1045-1090 (FQRS…RTEN), 1102-1163 (FSRA…GEEE), and 1187-1252 (VLTQ…SASP). A compositionally biased stretch (basic residues) spans 337-364 (RQHHRHRHHHQSLPKIRKAKSQSFRTRR). 4 stretches are compositionally biased toward polar residues: residues 378–388 (LTLNTSLTSGN), 410–430 (SPGSSSQKTPTSLSRQGTLRA), 437–449 (SGQLSISLGTQGR), and 472–487 (GLRSPNDPMTSPTVRS). The span at 589–623 (KSAEREREAAEAAAREKEKEKEKEAAQPQEKKSVM) shows a compositional bias: basic and acidic residues. Residues 664–680 (STFSASPAASSTAAKSA) are compositionally biased toward low complexity. Positions 713–723 (KRDDEEKEKQK) are enriched in basic and acidic residues. The span at 736-748 (DLSQTNADQQVGG) shows a compositional bias: polar residues. The span at 836 to 855 (RRSESREPIEPRISEERESD) shows a compositional bias: basic and acidic residues. 2 stretches are compositionally biased toward low complexity: residues 1047-1056 (RSGSSCGGRK) and 1107-1128 (SPLSQQTSSNYSSRDSYDSSGS). Positions 1187-1207 (VLTQQLSTGSMSTPSGYTNGT) are enriched in polar residues. Residues 1226–1252 (APLSSCGFSSGSEFEPPSPRRAASASP) show a composition bias toward low complexity.

The chain is Serine-enriched protein (gprs) from Drosophila melanogaster (Fruit fly).